The sequence spans 183 residues: Microfibrillar-associated protein 2 (183 aa).

The or 19 signal peptide spans 1–17 (MRAAYLFLLFLPAGLLA). A Pyrrolidone carboxylic acid modification is found at Q18. Y47, Y48, and Y50 each carry sulfotyrosine. Residues 58–94 (SEEQFQFQSQQQVQQEVIPAPTPEPGNAELEPTEPGP) are disordered. Low complexity predominate over residues 60 to 74 (EQFQFQSQQQVQQEV). Residues 153 to 183 (CRDKFSKCGVMASSGLCQSVAASCARSCGSC) form the ShKT domain. 3 disulfides stabilise this stretch: C153–C183, C160–C176, and C169–C180.

This sequence belongs to the MFAP family. In terms of assembly, forms a ternary complex with BGN and ELN. Interacts with FBN1 (via N-terminal domain) and FBN2. Post-translationally, forms intermolecular disulfide bonds either with other MAGP-1 molecules or with other components of the microfibrils. May form transglutaminase cross-links. O-glycosylated.

It is found in the secreted. It localises to the extracellular space. Its subcellular location is the extracellular matrix. Functionally, component of the elastin-associated microfibrils. The protein is Microfibrillar-associated protein 2 (MFAP2) of Homo sapiens (Human).